The chain runs to 416 residues: Fusaric acid cluster transcription factor FUB10 (416 aa).

The segment at residues 16–47 is a DNA-binding region (zn(2)-C6 fungal-type); the sequence is CDRCRAQKLRCHRDSGHSTDACLRCLKSGIEC. The segment at 50 to 92 is disordered; sequence SKARPTGRPPSRQVQPTVSVEQGDTSSSSHTTDSSPSAGGTDI. Over residues 61–73 the composition is skewed to polar residues; it reads RQVQPTVSVEQGD. The segment covering 74 to 86 has biased composition (low complexity); the sequence is TSSSSHTTDSSPS.

It localises to the nucleus. Transcription factor that regulates the expression of the gene cluster that mediates the biosynthesis of fusaric acid, a mycotoxin with low to moderate toxicity to animals and humans, but with high phytotoxic properties. The sequence is that of Fusaric acid cluster transcription factor FUB10 from Fusarium oxysporum f. sp. lycopersici (strain 4287 / CBS 123668 / FGSC 9935 / NRRL 34936) (Fusarium vascular wilt of tomato).